The chain runs to 465 residues: Opioid growth factor receptor-like protein 1 (465 aa).

Disordered stretches follow at residues 1-89 (MGNL…GNAK) and 309-465 (ENFI…TSSG). Basic and acidic residues-rich tracts occupy residues 48 to 59 (REQPEQPPERAG), 316 to 325 (PKKEQPERSK), 363 to 396 (TVEEKKVASREPGEETDKPSPEASSEDTKPRNSE), and 426 to 440 (SEKDGEGENQSKDSE). Residues 442–465 (PENTSCHAEVVSQQNVTNPQTSSG) show a composition bias toward polar residues.

It belongs to the opioid growth factor receptor family.

The polypeptide is Opioid growth factor receptor-like protein 1 (Ogfrl1) (Rattus norvegicus (Rat)).